Here is a 430-residue protein sequence, read N- to C-terminus: Enolase (430 aa).

Residue glutamine 164 coordinates (2R)-2-phosphoglycerate. Residue glutamate 208 is the Proton donor of the active site. Mg(2+) contacts are provided by aspartate 245, glutamate 288, and aspartate 315. (2R)-2-phosphoglycerate contacts are provided by lysine 340, arginine 369, serine 370, and lysine 391. Catalysis depends on lysine 340, which acts as the Proton acceptor.

It belongs to the enolase family. Mg(2+) serves as cofactor.

Its subcellular location is the cytoplasm. The protein localises to the secreted. It is found in the cell surface. It carries out the reaction (2R)-2-phosphoglycerate = phosphoenolpyruvate + H2O. It participates in carbohydrate degradation; glycolysis; pyruvate from D-glyceraldehyde 3-phosphate: step 4/5. In terms of biological role, catalyzes the reversible conversion of 2-phosphoglycerate (2-PG) into phosphoenolpyruvate (PEP). It is essential for the degradation of carbohydrates via glycolysis. The polypeptide is Enolase (Thermococcus onnurineus (strain NA1)).